The chain runs to 910 residues: Coatomer subunit beta'-2 (910 aa).

WD repeat units lie at residues 13 to 52, 55 to 94, 97 to 136, 140 to 180, 183 to 224, 227 to 266, 269 to 309, 351 to 393, and 461 to 501; these read QRSE…MVKS, VTEL…KVKV, AHTD…MCTQ, GHSH…PNFT, GHSK…CVQT, GHAH…LENT, YGLE…ASMD, TCDL…GSAL, and RIDV…SHLD. The interval 882–910 is disordered; sequence ADGSTDGAVLVNGNDTEEQWGTNNEESSA. Over residues 900-910 the composition is skewed to polar residues; that stretch reads QWGTNNEESSA.

The protein belongs to the WD repeat COPB2 family. In terms of assembly, oligomeric complex that consists of at least the alpha, beta, beta', gamma, delta, epsilon and zeta subunits.

Its subcellular location is the cytoplasm. It localises to the golgi apparatus membrane. It is found in the cytoplasmic vesicle. The protein resides in the COPI-coated vesicle membrane. Its function is as follows. The coatomer is a cytosolic protein complex that binds to dilysine motifs and reversibly associates with Golgi non-clathrin-coated vesicles, which further mediate biosynthetic protein transport from the ER, via the Golgi up to the trans Golgi network. Coatomer complex is required for budding from Golgi membranes, and is essential for the retrograde Golgi-to-ER transport of dilysine-tagged proteins. This chain is Coatomer subunit beta'-2, found in Oryza sativa subsp. japonica (Rice).